The chain runs to 322 residues: Probable 5-dehydro-4-deoxyglucarate dehydratase 2 (322 aa).

It belongs to the DapA family.

It catalyses the reaction 5-dehydro-4-deoxy-D-glucarate + H(+) = 2,5-dioxopentanoate + CO2 + H2O. It participates in carbohydrate acid metabolism; D-glucarate degradation; 2,5-dioxopentanoate from D-glucarate: step 2/2. In Streptomyces coelicolor (strain ATCC BAA-471 / A3(2) / M145), this protein is Probable 5-dehydro-4-deoxyglucarate dehydratase 2.